A 1123-amino-acid polypeptide reads, in one-letter code: MTTILKGYYLKVTLENRIVKHNGRKVYLSIVEHGNGIPDHALILKTTAKCVKFSVCLSIRSQCGWKELDQNDSGELTFDLKVEVTGKSQRAPLFPLIFQLCEKNYDQVTLISKSVIPVKAITKIPKKSLRAELVPLGESPTKPPQAFPASPSDLISSKEYDDEFDGGNGGNSGTNGDGDDGGCSLGGLADENDYEDGMVIDENGNVCSSGSGDGGGGGGGGGDISPKLTSSLNNLKSSISNTSLSSLGNSLNNSLNGTNSQMLQYQQQQQQQQQQHGNLNVSGNNINNNRDTNVSGNNNNNNNSTTTTTTTTTTTTHSNNSNMGGSKKPLNNSNSNIHFLTNQQNSDTPLSNSSSSTPTLSPAQSAISSPTLSNIINSNSNSTSNLNDLIKDSSQPSTSTSTSTSSSSSSSSSSSSSSSSSSSSSSSSSSSSSSSSSSSSSSSSSSSSSSSSSSSSSSSSSSSSQPTLNQHSKYIPKSLHSSLSSIPINNKENNNNNNNRDNRDKDICTTSPNLNDSINNTLDLFNKKINSNNNNNNNNSNNNNNISSQERPLLNSPHVQLTHQQQQQQQQQQQQQQQQHQQQHQKIGMSKSSSELQVPSSNYHKQSDDLNPLDFLSAIATMGSNSLSSILCKDDSKTNTNKDKDNNNSNSNKDSSNNNNNNNNNNNNNNNNNNNNNNNNNNNNNNNNNNNNNNNNNNNNNNNINNNEDLLPNPGSSKFAKYSADQSVSSSSLNTPLSSPIVKSQSYQQPQSQSQQRSQSPLPLHNNISSINTSIHNAINSLKPKPLHLSSPSIPTTSPDAPYRLPSLNSSSNNINNQSDYWSAINPINSSGTNITNNNYNNNNNNYNNNNNNNNNNNNNNNNNNNNNNNNNNNNSNSNNNNNNNNNNNNINNNNSNSNNNMNSNNNNNNINNINNNNNNNNNNNNNNNNNNNNNNNNNNNNNSNSNNNNCNNNNNGGSNIHSLNNSSNSVNYNNNNNNNNNNINKDKKNKKKLSASTPIFGESNLGDIINNVIDEHQLNSNNNNNNNTPHFSFNNNSLKELKPLKRKASIRNSSGGVITNENGWTTIVNNNNNNNNNNNNNNNNNNNNNNNNNNNNNISSNLPIISGLLSLSKVDSTSVDKL.

Disordered stretches follow at residues 136-229 (LGES…PKLT), 262-471 (MLQY…LNQH), 483-514 (LSSIPINNKENNNNNNNRDNRDKDICTTSPNL), 527-609 (KKIN…QSDD), 629-769 (SILC…NNIS), 782-812 (LKPKPLHLSSPSIPTTSPDAPYRLPSLNSSS), 835-1005 (ITNN…GESN), and 1070-1099 (NNNNNNNNNNNNNNNNNNNNNNNNNNNNNI). Residues 166–185 (GGNGGNSGTNGDGDDGGCSL) show a composition bias toward gly residues. The segment covering 190–199 (DENDYEDGMV) has biased composition (acidic residues). Residues 211–223 (SGDGGGGGGGGGD) are compositionally biased toward gly residues. The segment covering 262-322 (MLQYQQQQQQ…TTTTHSNNSN (61 aa)) has biased composition (low complexity). Residues 329–343 (PLNNSNSNIHFLTNQ) are compositionally biased toward polar residues. Low complexity-rich tracts occupy residues 344-387 (QNSD…SNLN), 397-464 (STST…SSSS), 489-499 (NNKENNNNNNN), 527-548 (KKINSNNNNNNNNSNNNNNISS), and 563-585 (HQQQQQQQQQQQQQQQQHQQQHQ). The span at 590-604 (SKSSSELQVPSSNYH) shows a compositional bias: polar residues. Over residues 632–646 (CKDDSKTNTNKDKDN) the composition is skewed to basic and acidic residues. Composition is skewed to low complexity over residues 647-707 (NNSN…INNN) and 727-769 (SVSS…NNIS). A compositionally biased stretch (polar residues) spans 790 to 799 (SSPSIPTTSP). Low complexity-rich tracts occupy residues 835-984 (ITNN…NNNI) and 1070-1098 (NNNNNNNNNNNNNNNNNNNNNNNNNNNNN).

This is an uncharacterized protein from Dictyostelium discoideum (Social amoeba).